Consider the following 1209-residue polypeptide: MFLMNASPVVALQSKWEAFGPPGSCRFPRCFSEADEGVESASVSARVQMLISTLQRDGAARGTSDERAAQRGHRAEGCHDARPAAKPTVHKEPPALAVCGLVADFDPMGEEETTDFGPLVLDSDSDDSVDRDIEEAIQEYLKAKSGAAQPGAGGAQPGAAQPSRAAGGGSRCKPEPAHGSAPTALCPPKLVPGSGGGPGSQVGSSKDQGSASPVSVSSDDSFEQSIRAEIEQFLNEKRQHETQKCDGSVEKKPDTNENSAKSLLKSHQEPPTKVVHRQGLLGVQKEFAFRKPPRLAKMNVQPRSLRSKVTTTQENEGSTKPATPCRPSEAAQNKGGIKRSASAARRGKRVMSAAQASEASDSSSDDGIEEAIQLYQLQKTRKEADGDLPQRVQLREERAPDPPAHSTSSATKSALPETHRKTPSKKKLVATKTMDPGPGGLDTDHAPKLLKETKAPPPASPASRSEFVERSSCRADTSAELMCAEAILDISKTILPAPVEGSDGSLSASPLFYSPNVPSRSDGDSSSVDSDDSIEQEIRTFLALKAQSGSLLARGESCPQAAQGPLLPPGLNSQTGGHKTPLSKTPDPLLGCKRKRRGGGHVRPSTPKKMQEVVKDGSQDADHSQGRAEPGHERRDLPIQGKASEALGGEGTARGPGDTRMSQGQGKTDEARRLDEKESSEDKSSSLDSDEDLDTAIKDLLRSKRKLKKRCREPRAACRKKVRFSTAQTHFLEQLGGLRRDWKDRGPPVLKSCLSKSKRDSGEGPGKKPPSVFGSTAERMRQEGAASQDAALAFRVRRPASASASEGNPFPRESQGPAPSPGSLSDDSSSVDSNDSIELEIRKFLAEKAKESVSSSEVQAEGPTALGTGGPARPEVLCRKEPAPPPGVCTRSQRARGVPHLAEGLRGTESAGAQGTAGLFSQGGKGLPAAPARGDPVPPRSTSGGVSAKGLSVSRRNVYVHKDQSPRGAEPAAKSAFGQLPSCATAGTEAGGARGTFHMGCGSPSFLTPSPGAERDAGAQADRTPPWSDFAHQSRLPSPWVLRSEGRDAVWRGGVGSERDKGSEGPARGLPSLPLAGFSPLLSTQLFHFGKGVSWGGRQAGLFSPHLGLPLQGPSFSAFREAQAGPSPVFGSPHLLAKKDGGPWPTRKAQAGLSLHDRRSSGSEESILDLRYRRRVNRDDQEQDALGSDASDFSDTSTEDSGGSSVVKV.

Disordered regions lie at residues 57 to 91 (DGAA…TVHK), 145 to 279 (SGAA…HRQG), 291 to 471 (KPPR…VERS), 501 to 532 (GSDG…DSDD), 555 to 694 (GESC…EDLD), 733 to 836 (EQLG…SNDS), 848 to 1033 (KAKE…FAHQ), 1052 to 1072 (RGGV…GLPS), and 1118 to 1209 (AFRE…VVKV). The span at 63–91 (TSDERAAQRGHRAEGCHDARPAAKPTVHK) shows a compositional bias: basic and acidic residues. Over residues 201–219 (QVGSSKDQGSASPVSVSSD) the composition is skewed to low complexity. The span at 226 to 255 (IRAEIEQFLNEKRQHETQKCDGSVEKKPDT) shows a compositional bias: basic and acidic residues. The span at 301 to 321 (QPRSLRSKVTTTQENEGSTKP) shows a compositional bias: polar residues. Low complexity predominate over residues 352 to 362 (SAAQASEASDS). The span at 442-454 (DTDHAPKLLKETK) shows a compositional bias: basic and acidic residues. Basic and acidic residues-rich tracts occupy residues 609 to 637 (KMQE…RRDL), 667 to 685 (KTDE…DKSS), and 757 to 766 (SKRDSGEGPG). 2 stretches are compositionally biased toward low complexity: residues 821 to 836 (PGSL…SNDS) and 852 to 861 (SVSSSEVQAE). The residue at position 1161 (Ser1161) is a Phosphoserine. Positions 1187–1209 (GSDASDFSDTSTEDSGGSSVVKV) are enriched in low complexity.

As to quaternary structure, interacts with UTP20 and PPP1CA. As to expression, ubiquitous in normal tissues. Expressed in numerous adenocarcinoma cell lines.

It is found in the nucleus. It localises to the nucleolus. Its function is as follows. Inhibits phosphatase activity of protein phosphatase 1 (PP1) complexes. May positively regulate cell proliferation. This is Protein phosphatase 1 regulatory subunit 26 (PPP1R26) from Homo sapiens (Human).